Consider the following 440-residue polypeptide: Probable D-serine dehydratase (440 aa).

Lys111 is modified (N6-(pyridoxal phosphate)lysine).

The protein belongs to the serine/threonine dehydratase family. DsdA subfamily. The cofactor is pyridoxal 5'-phosphate.

The enzyme catalyses D-serine = pyruvate + NH4(+). In Rhizobium leguminosarum bv. trifolii (strain WSM2304), this protein is Probable D-serine dehydratase.